The primary structure comprises 429 residues: Nicotinate phosphoribosyltransferase (429 aa).

Nicotinate is bound by residues Y15, F177, and T229. A Phosphohistidine; by autocatalysis modification is found at H232. R294 lines the nicotinate pocket. T355 lines the 5-phospho-alpha-D-ribose 1-diphosphate pocket.

It belongs to the NAPRTase family. In terms of processing, transiently phosphorylated on a His residue during the reaction cycle. Phosphorylation strongly increases the affinity for substrates and increases the rate of nicotinate D-ribonucleotide production. Dephosphorylation regenerates the low-affinity form of the enzyme, leading to product release.

The protein localises to the cytoplasm. Its subcellular location is the nucleus. It catalyses the reaction nicotinate + 5-phospho-alpha-D-ribose 1-diphosphate + ATP + H2O = nicotinate beta-D-ribonucleotide + ADP + phosphate + diphosphate. It functions in the pathway cofactor biosynthesis; NAD(+) biosynthesis; nicotinate D-ribonucleotide from nicotinate: step 1/1. In terms of biological role, catalyzes the first step in the biosynthesis of NAD from nicotinic acid, the ATP-dependent synthesis of beta-nicotinate D-ribonucleotide from nicotinate and 5-phospho-D-ribose 1-phosphate. Essential for growth under anaerobic conditions. This Saccharomyces cerevisiae (strain ATCC 204508 / S288c) (Baker's yeast) protein is Nicotinate phosphoribosyltransferase (NPT1).